The following is a 141-amino-acid chain: Hemoglobin subunit alpha-2 (141 aa).

The Globin domain maps to 1–141 (VLSPADKNNV…VSTVLTSKYR (141 aa)). Residue His58 participates in O2 binding. His87 is a heme b binding site.

This sequence belongs to the globin family. In terms of assembly, heterotetramer of two alpha chains and two beta chains. In terms of tissue distribution, red blood cells.

In terms of biological role, involved in oxygen transport from the lung to the various peripheral tissues. The polypeptide is Hemoglobin subunit alpha-2 (Varecia variegata (Black-and-white ruffed lemur)).